We begin with the raw amino-acid sequence, 219 residues long: Uridylate kinase (219 aa).

An ATP-binding site is contributed by 9-10 (GS). Glycine 41 provides a ligand contact to UMP. ATP-binding residues include glycine 42 and arginine 46. UMP contacts are provided by residues aspartate 63 and 110–116 (TFPGHTT). ATP contacts are provided by threonine 136, asparagine 137, tyrosine 142, and aspartate 145.

It belongs to the UMP kinase family. As to quaternary structure, homohexamer.

It is found in the cytoplasm. The catalysed reaction is UMP + ATP = UDP + ADP. The protein operates within pyrimidine metabolism; CTP biosynthesis via de novo pathway; UDP from UMP (UMPK route): step 1/1. Its activity is regulated as follows. Inhibited by UTP. Its function is as follows. Catalyzes the reversible phosphorylation of UMP to UDP. This is Uridylate kinase from Archaeoglobus fulgidus (strain ATCC 49558 / DSM 4304 / JCM 9628 / NBRC 100126 / VC-16).